We begin with the raw amino-acid sequence, 256 residues long: Large ribosomal subunit protein uL2 (256 aa).

The tract at residues Glu-208 to Ser-230 is disordered.

Belongs to the universal ribosomal protein uL2 family. As to expression, in larvae tissues examined: gut, brain imaginal disk, salivary glands, fat body, muscles, epidermis and trachaea.

Its subcellular location is the cytoplasm. This chain is Large ribosomal subunit protein uL2 (RpL8), found in Drosophila melanogaster (Fruit fly).